An 83-amino-acid chain; its full sequence is RNA-binding protein Hfq (83 aa).

Residues 10–70 (DTFLNQVRKE…ISTVMPLRPI (61 aa)) form the Sm domain.

It belongs to the Hfq family. As to quaternary structure, homohexamer.

Its function is as follows. RNA chaperone that binds small regulatory RNA (sRNAs) and mRNAs to facilitate mRNA translational regulation in response to envelope stress, environmental stress and changes in metabolite concentrations. Also binds with high specificity to tRNAs. The polypeptide is RNA-binding protein Hfq (Desulfitobacterium hafniense (strain DSM 10664 / DCB-2)).